An 858-amino-acid chain; its full sequence is Heat shock protein 105 kDa (858 aa).

Serine 2 bears the N-acetylserine mark. Lysine 471 bears the N6-acetyllysine mark. Disordered regions lie at residues lysine 500–alanine 585 and valine 801–aspartate 858. Positions glutamate 504–methionine 515 are enriched in acidic residues. 2 positions are modified to phosphoserine: serine 509 and serine 510. Residues glutamine 533–serine 555 are compositionally biased toward polar residues. Serine 558 is modified (phosphoserine). The residue at position 562 (threonine 562) is a Phosphothreonine. 2 stretches are compositionally biased toward basic and acidic residues: residues glutamate 564–alanine 585 and proline 806–arginine 815. Serine 810 bears the Phosphoserine mark. Threonine 816 carries the phosphothreonine modification.

It belongs to the heat shock protein 70 family. In terms of assembly, interacts with HSPA8/HSC70. Interacts with HSPA1A (via NBD) and HSPA1B (via NBD). Post-translationally, phosphorylation on Ser-509 may be important for regulation of the HSPA8/HSC70 chaperone activity.

It is found in the cytoplasm. Its function is as follows. Acts as a nucleotide-exchange factor (NEF) for chaperone proteins HSPA1A and HSPA1B, promoting the release of ADP from HSPA1A/B thereby triggering substrate release. Prevents the aggregation of denatured proteins in cells under severe stress, on which the ATP levels decrease markedly. Inhibits HSPA8/HSC70 ATPase and chaperone activities. The chain is Heat shock protein 105 kDa (Hsph1) from Rattus norvegicus (Rat).